Here is a 264-residue protein sequence, read N- to C-terminus: Thymidylate synthase (264 aa).

Residue R21 participates in dUMP binding. A (6R)-5,10-methylene-5,6,7,8-tetrahydrofolate-binding site is contributed by H51. DUMP is bound at residue 126–127; sequence RR. C146 functions as the Nucleophile in the catalytic mechanism. DUMP is bound by residues 166 to 169, N177, and 207 to 209; these read RSGD and HLY. D169 contacts (6R)-5,10-methylene-5,6,7,8-tetrahydrofolate. Residue A263 participates in (6R)-5,10-methylene-5,6,7,8-tetrahydrofolate binding.

The protein belongs to the thymidylate synthase family. Bacterial-type ThyA subfamily. Homodimer.

The protein localises to the cytoplasm. The enzyme catalyses dUMP + (6R)-5,10-methylene-5,6,7,8-tetrahydrofolate = 7,8-dihydrofolate + dTMP. The protein operates within pyrimidine metabolism; dTTP biosynthesis. Its function is as follows. Catalyzes the reductive methylation of 2'-deoxyuridine-5'-monophosphate (dUMP) to 2'-deoxythymidine-5'-monophosphate (dTMP) while utilizing 5,10-methylenetetrahydrofolate (mTHF) as the methyl donor and reductant in the reaction, yielding dihydrofolate (DHF) as a by-product. This enzymatic reaction provides an intracellular de novo source of dTMP, an essential precursor for DNA biosynthesis. The sequence is that of Thymidylate synthase from Xanthomonas axonopodis pv. citri (strain 306).